The primary structure comprises 545 residues: Carboxylesterase 5A (545 aa).

The signal sequence occupies residues 1-28; that stretch reads MSGMWVHPGRTLIWALWVLAAVIKGPAA. Residue N86 is glycosylated (N-linked (GlcNAc...) (complex) asparagine). An intrachain disulfide couples C94 to C121. N134 is a glycosylation site (N-linked (GlcNAc...) asparagine). S226 (acyl-ester intermediate) is an active-site residue. An intrachain disulfide couples C281 to C292. The active-site Charge relay system is E346. N363 and N443 each carry an N-linked (GlcNAc...) asparagine glycan. Catalysis depends on H454, which acts as the Charge relay system.

It belongs to the type-B carboxylesterase/lipase family. Post-translationally, N-glycosylated; contains a fucosylated complex carbohydrate. As to expression, present at high level in urine. Expressed in the kidney proximal straight tubular cells and is secreted from the apical compartment of the cells into the urine (at protein level). In mature cats, it is present at higher level in intact males than in castrated males or in intact or spayed females.

It localises to the secreted. The enzyme catalyses a carboxylic ester + H2O = an alcohol + a carboxylate + H(+). In terms of biological role, carboxylesterase present at high level in urine that regulates production of felinine, a probable pheromone precursor. Probably acts by hydrolyzing the peptide bond of the felinine precursor 3-methylbutanol cyteinylglycine, producing felinine and glycine in cat urine. The polypeptide is Carboxylesterase 5A (CES5A) (Felis catus (Cat)).